A 116-amino-acid chain; its full sequence is Chorion protein S15 (116 aa).

A signal peptide spans 1–18; the sequence is MKFLIAFAVLALVACINA.

Belongs to the chorion protein S15/S18 family.

The protein resides in the secreted. Functionally, chorion membrane (egg shell) protein; plays a role in protecting the egg from the environment. The protein is Chorion protein S15 (Cp15) of Drosophila virilis (Fruit fly).